A 265-amino-acid polypeptide reads, in one-letter code: Aquaporin-5 (265 aa).

Residues 1–12 (MKKEVCSLAFFK) lie on the Cytoplasmic side of the membrane. The chain crosses the membrane as a helical span at residues 13–33 (AVFAEFLATLIFVFFGLGSAL). At 34–39 (KWPSAL) the chain is on the extracellular side. The chain crosses the membrane as a helical span at residues 40–60 (PTILQISIAFGLAIGTLAQAL). The Cytoplasmic segment spans residues 61 to 65 (GPVSG). Positions 66–74 (GHINPAITL) form an intramembrane region, discontinuously helical. Positions 69–71 (NPA) match the NPA 1 motif. At 75-87 (ALLIGNQISLLRA) the chain is on the cytoplasmic side. A helical transmembrane segment spans residues 88–108 (VFYVAAQLVGAIAGAGILYWL). The Extracellular portion of the chain corresponds to 109-126 (APLNARGNLAVNALNNNT). N124 carries N-linked (GlcNAc...) asparagine glycosylation. Residues 127-147 (TPGKAMVVELILTFQLALCIF) form a helical membrane-spanning segment. Residues 148 to 158 (SSTDSRRTSPV) lie on the Cytoplasmic side of the membrane. Residues 159–179 (GSPALSIGLSVTLGHLVGIYF) form a helical membrane-spanning segment. Position 180 (T180) is a topological domain, extracellular. The segment at residues 181–191 (GCSMNPARSFG) is an intramembrane region (discontinuously helical). Residues 185-187 (NPA) carry the NPA 2 motif. Residues 192-203 (PAVVMNRFSPSH) lie on the Extracellular side of the membrane. A helical transmembrane segment spans residues 204–224 (WVFWVGPIVGAMLAAILYFYL). Topologically, residues 225 to 265 (LFPSSLSLHDRVAVVKGTYEPEEDWEDHREERKKTIELTAH) are cytoplasmic.

Belongs to the MIP/aquaporin (TC 1.A.8) family. In terms of assembly, homotetramer; each monomer provides an independent water pore. Interacts with TRPV4; the interaction is probably indirect and regulates TRPV4 activation by hypotonicity. Salivary glands, lacrimal glands, corneal epithelium in eye, trachea and lung.

The protein localises to the apical cell membrane. The protein resides in the cell membrane. It localises to the cytoplasmic vesicle membrane. The catalysed reaction is H2O(in) = H2O(out). Aquaporins form homotetrameric transmembrane channels, with each monomer independently mediating water transport across the plasma membrane along its osmotic gradient. Plays an important role in fluid secretion in salivary glands. Required for TRPV4 activation by hypotonicity. Together with TRPV4, controls regulatory volume decrease in salivary epithelial cells. Seems to play a redundant role in water transport in the eye, lung and in sweat glands. In Rattus norvegicus (Rat), this protein is Aquaporin-5.